The following is a 396-amino-acid chain: tRNA (guanine-N(7)-)-methyltransferase non-catalytic subunit wuho (396 aa).

WD repeat units lie at residues 75–115 (KVEV…AQLL), 162–201 (GHLS…DIHS), 205–243 (GHKE…ELLL), and 302–342 (AGTW…RASG).

Belongs to the WD repeat TRM82 family. As to quaternary structure, forms a heterodimer with the catalytic subunit Mettl1. Interacts with mei-P26 and weakly interacts with bgcn; required for the function or formation of the mei-P26-bgcn-bam-sxl complex. Interacts with nanos; may be involved in mei-P26-dependent derepression of the BMP signaling pathway. Interacts with Myc; the interaction may be mediated by mei-P26 and may be involved in the regulation of ribosome biogenesis. In terms of tissue distribution, in testis, it is present at high level in hub cells, a niche for germline stem cells of testis. Ubiquitously expressed in all testicular cells throughout spermatogenesis. Ubiquitously expressed in all germline and somatic cells of the ovary.

It localises to the nucleus. It is found in the cytoplasm. The protein operates within tRNA modification; N(7)-methylguanine-tRNA biosynthesis. Functionally, required for the Mettl1-dependent formation of N(7)-methylguanine at position 46 (m7G46) in tRNA. In the Mettl1-wuho methyltransferase complex, it is required to stabilize and induce conformational changes of the catalytic subunit. Required for binding of nanos mRNA and repression of translation by the mei-P26-bgcn-bam-sxl complex. May cooperate with mei-P26 and nanos to derepress the BMP signaling pathway. May cooperate with mei-P26 to suppress expression of a subset of microRNAs. May cooperate with mei-P26 to regulate bam expression levels in germline cells during gametogenesis. Required to promote mitosis to meiosis transition during gametogenesis. May regulate germline cell division in part by regulating ribosome biogenesis. The chain is tRNA (guanine-N(7)-)-methyltransferase non-catalytic subunit wuho from Drosophila pseudoobscura pseudoobscura (Fruit fly).